Here is a 300-residue protein sequence, read N- to C-terminus: Meiotically up-regulated gene 165 protein (300 aa).

2 disordered regions span residues Met-1–Ser-38 and Thr-50–Glu-109. The span at Glu-21–Ser-38 shows a compositional bias: polar residues. Low complexity predominate over residues Ser-52–Ser-69. The segment covering Thr-94–Lys-103 has biased composition (basic residues).

The protein resides in the nucleus. Has a role in meiosis. The sequence is that of Meiotically up-regulated gene 165 protein (mug165) from Schizosaccharomyces pombe (strain 972 / ATCC 24843) (Fission yeast).